A 538-amino-acid chain; its full sequence is ATP synthase subunit alpha, mitochondrial (538 aa).

G197–T204 provides a ligand contact to ATP. The segment at F228 to L248 is essential and sufficient for enterobactin binding.

This sequence belongs to the ATPase alpha/beta chains family. As to quaternary structure, subunit of the F-type ATPase which has 2 components, CF(1) - the catalytic core - and CF(0) - the membrane proton channel. As to expression, ubiquitous (at protein level).

Its subcellular location is the mitochondrion. The protein localises to the mitochondrion inner membrane. Its function is as follows. Mitochondrial membrane ATP synthase (F(1)F(0) ATP synthase or Complex V) produces ATP from ADP in the presence of a proton gradient across the membrane which is generated by electron transport complexes of the respiratory chain. F-type ATPases consist of two structural domains, F(1) - containing the extramembraneous catalytic core, and F(0) - containing the membrane proton channel, linked together by a central stalk and a peripheral stalk. During catalysis, ATP synthesis in the catalytic domain of F(1) is coupled via a rotary mechanism of the central stalk subunits to proton translocation. Subunits alpha and beta form the catalytic core in F(1). Rotation of the central stalk against the surrounding subunits leads to hydrolysis of ATP in three separate catalytic sites on the beta subunits. Subunit alpha does not bear the catalytic high-affinity ATP-binding sites. Binds the bacterial siderophore enterobactin and is required for the assimilation of enterobactin-bound iron from non-pathogenic bacteria. Promotes mitochondrial accumulation of enterobactin-derived iron ions. This is ATP synthase subunit alpha, mitochondrial from Caenorhabditis elegans.